Here is a 481-residue protein sequence, read N- to C-terminus: Ribosomal protein uS12 methylthiotransferase RimO (481 aa).

In terms of domain architecture, MTTase N-terminal spans 8-124 (MTVHLVSMGC…IAGRLRTILD (117 aa)). [4Fe-4S] cluster-binding residues include C17, C53, and C87. A disordered region spans residues 148–188 (PTARAEVSVPGHGTAPDLSASVTPDSGPRATRRRLGTGPSA). Residues 182-413 (LGTGPSAPLK…DLTDELVSQR (232 aa)) form the Radical SAM core domain. The [4Fe-4S] cluster site is built by C196, C200, and C203. Positions 415 to 480 (EDRIGTRGRV…GVDLVARPAN (66 aa)) constitute a TRAM domain.

This sequence belongs to the methylthiotransferase family. RimO subfamily. The cofactor is [4Fe-4S] cluster.

The protein resides in the cytoplasm. It carries out the reaction L-aspartate(89)-[ribosomal protein uS12]-hydrogen + (sulfur carrier)-SH + AH2 + 2 S-adenosyl-L-methionine = 3-methylsulfanyl-L-aspartate(89)-[ribosomal protein uS12]-hydrogen + (sulfur carrier)-H + 5'-deoxyadenosine + L-methionine + A + S-adenosyl-L-homocysteine + 2 H(+). Its function is as follows. Catalyzes the methylthiolation of an aspartic acid residue of ribosomal protein uS12. The chain is Ribosomal protein uS12 methylthiotransferase RimO from Cutibacterium acnes (strain DSM 16379 / KPA171202) (Propionibacterium acnes).